The following is a 429-amino-acid chain: 3-phosphoshikimate 1-carboxyvinyltransferase (429 aa).

3 residues coordinate 3-phosphoshikimate: Lys23, Ser24, and Arg28. Lys23 is a binding site for phosphoenolpyruvate. Phosphoenolpyruvate is bound by residues Gly94 and Arg126. Residues Ser171, Ser172, Gln173, Ser199, Asp316, Asn339, and Lys343 each coordinate 3-phosphoshikimate. Gln173 provides a ligand contact to phosphoenolpyruvate. Asp316 acts as the Proton acceptor in catalysis. Phosphoenolpyruvate contacts are provided by Arg347, Arg389, and Lys414.

The protein belongs to the EPSP synthase family. Monomer.

It is found in the cytoplasm. The catalysed reaction is 3-phosphoshikimate + phosphoenolpyruvate = 5-O-(1-carboxyvinyl)-3-phosphoshikimate + phosphate. It participates in metabolic intermediate biosynthesis; chorismate biosynthesis; chorismate from D-erythrose 4-phosphate and phosphoenolpyruvate: step 6/7. Functionally, catalyzes the transfer of the enolpyruvyl moiety of phosphoenolpyruvate (PEP) to the 5-hydroxyl of shikimate-3-phosphate (S3P) to produce enolpyruvyl shikimate-3-phosphate and inorganic phosphate. This Idiomarina loihiensis (strain ATCC BAA-735 / DSM 15497 / L2-TR) protein is 3-phosphoshikimate 1-carboxyvinyltransferase.